The sequence spans 648 residues: MAATRYPPNDLRRQVGSPRSKGRENKDTLCRNILIYGNCRYEDQGCTFNHDQNKNPSPQADFSKKTFNVDSPAFTPSSQPQVLAKKTTLSSQAANAAPFTPRGAGTPNLQQTAEASVFNPAAIREFTPQNYDIGNTNSNGVPQENGIYSDPFTTMGSLGSTLPSAGQYNLYASDHNSLGGPGAQFYPQHGSFPAGPLQPPNYHLYQPHDSYRQELQPWQRATYDFFIPAKMREELQKKMFATQQVMPNSGLPQLERWHSLFPLDTNNRKNTSSFGYPSWVYKAQNSRTARHYALRRLEGYRLTNEKAILTVMKEWKKIKNGNVVTVHEAFTTREFGDSSLIFAYDYHPLSKTLQEHHLQPTHGNRYRAPSAVPENVLWGYICQITNALKTIHSNKLAARCLEPSKIILSDNNRIRLSACSILDVVQFESNTKSVAELQQEDLVKFGKLILALATGAPPAHLNNIQVALDSLVTKYSANLKDAVAWLIAPSNPGESKSIENFISGIATHMTAFFDLALQDGDEKQFHLARELENGRIARSMMKLMTIIERAEPGGAQSWSETGERYQLKLFRDYVFHRVEADGKPNLAVGHMLSCLSKLDAGIDEMVVLTSRDNETVFVLSYRELKQMFDRAFNELVKHSKTGAPGANN.

Residues 1–24 (MAATRYPPNDLRRQVGSPRSKGRE) form a disordered region. Residues 24–53 (ENKDTLCRNILIYGNCRYEDQGCTFNHDQN) form a C3H1-type zinc finger. The tract at residues 244–506 (QVMPNSGLPQ…SIENFISGIA (263 aa)) is pseudokinase domain. Residues Arg-295, 345 to 352 (DYHPLSKT), and 404 to 405 (SK) each bind ATP. Residues 507–545 (THMTAFFDLALQDGDEKQFHLARELENGRIARSMMKLMT) adopt a coiled-coil conformation. Residues 546–648 (IIERAEPGGA…SKTGAPGANN (103 aa)) are knob domain.

This sequence belongs to the protein kinase superfamily. PAN3 family. In terms of assembly, homodimer. Forms a heterotrimer with a catalytic subunit PAN2 to form the poly(A)-nuclease (PAN) deadenylation complex. Interacts (via PAM-2 motif) with poly(A)-binding protein PAB1 (via PABC domain), conferring substrate specificity of the enzyme complex.

It localises to the cytoplasm. Its function is as follows. Regulatory subunit of the poly(A)-nuclease (PAN) deadenylation complex, one of two cytoplasmic mRNA deadenylases involved in mRNA turnover. PAN specifically shortens poly(A) tails of RNA and the activity is stimulated by poly(A)-binding protein PAB1. PAN deadenylation is followed by rapid degradation of the shortened mRNA tails by the CCR4-NOT complex. Deadenylated mRNAs are then degraded by two alternative mechanisms, namely exosome-mediated 3'-5' exonucleolytic degradation, or deadenylation-dependent mRNA decaping and subsequent 5'-3' exonucleolytic degradation by XRN1. May also be involved in post-transcriptional maturation of mRNA poly(A) tails. PAN3 acts as a positive regulator for PAN activity, recruiting the catalytic subunit PAN2 to mRNA via its interaction with RNA and with PAB1. This chain is PAN2-PAN3 deadenylation complex subunit PAN3, found in Chaetomium globosum (strain ATCC 6205 / CBS 148.51 / DSM 1962 / NBRC 6347 / NRRL 1970) (Soil fungus).